Consider the following 258-residue polypeptide: MTRRRQIYEGKAKILYEGPEPGTLIQYFKDDATAFNAQKKGTINGKGVLNNRISEHIFTMLGTIGVATHFIRRLNMREQLIRQVEIVPIEVVVRNVAAGSLTKRLGIEEGTQLPRTIIEYYYKDDALGDPMVADEHIACFGWASQEEMHDIADMAIRVNDFMCGLFAGIGIRLVDFKLEFGRFWDNDYSRVILADEISPDGCRLWDMATGEKLDKDRFRQDLGGEVEAYQEIARRLGLMPDGENMILDLESHRKNRGK.

It belongs to the SAICAR synthetase family.

It carries out the reaction 5-amino-1-(5-phospho-D-ribosyl)imidazole-4-carboxylate + L-aspartate + ATP = (2S)-2-[5-amino-1-(5-phospho-beta-D-ribosyl)imidazole-4-carboxamido]succinate + ADP + phosphate + 2 H(+). The protein operates within purine metabolism; IMP biosynthesis via de novo pathway; 5-amino-1-(5-phospho-D-ribosyl)imidazole-4-carboxamide from 5-amino-1-(5-phospho-D-ribosyl)imidazole-4-carboxylate: step 1/2. In Rhizorhabdus wittichii (strain DSM 6014 / CCUG 31198 / JCM 15750 / NBRC 105917 / EY 4224 / RW1) (Sphingomonas wittichii), this protein is Phosphoribosylaminoimidazole-succinocarboxamide synthase.